The sequence spans 618 residues: Proline--tRNA ligase (618 aa).

The protein belongs to the class-II aminoacyl-tRNA synthetase family. ProS type 1 subfamily. In terms of assembly, homodimer.

The protein resides in the cytoplasm. It catalyses the reaction tRNA(Pro) + L-proline + ATP = L-prolyl-tRNA(Pro) + AMP + diphosphate. Functionally, catalyzes the attachment of proline to tRNA(Pro) in a two-step reaction: proline is first activated by ATP to form Pro-AMP and then transferred to the acceptor end of tRNA(Pro). As ProRS can inadvertently accommodate and process non-cognate amino acids such as alanine and cysteine, to avoid such errors it has two additional distinct editing activities against alanine. One activity is designated as 'pretransfer' editing and involves the tRNA(Pro)-independent hydrolysis of activated Ala-AMP. The other activity is designated 'posttransfer' editing and involves deacylation of mischarged Ala-tRNA(Pro). The misacylated Cys-tRNA(Pro) is not edited by ProRS. The sequence is that of Proline--tRNA ligase from Streptococcus pyogenes serotype M1.